Reading from the N-terminus, the 527-residue chain is Glucose-6-phosphate isomerase (527 aa).

Glu323 functions as the Proton donor in the catalytic mechanism. Catalysis depends on residues His352 and Lys454.

It belongs to the GPI family.

The protein localises to the cytoplasm. It catalyses the reaction alpha-D-glucose 6-phosphate = beta-D-fructose 6-phosphate. The protein operates within carbohydrate biosynthesis; gluconeogenesis. It participates in carbohydrate degradation; glycolysis; D-glyceraldehyde 3-phosphate and glycerone phosphate from D-glucose: step 2/4. In terms of biological role, catalyzes the reversible isomerization of glucose-6-phosphate to fructose-6-phosphate. In Prochlorococcus marinus (strain MIT 9215), this protein is Glucose-6-phosphate isomerase.